Reading from the N-terminus, the 429-residue chain is Ribosomal RNA small subunit methyltransferase B (429 aa).

Residues 254-260 (CAAPGGK), Asp-277, Asp-303, and Asp-322 contribute to the S-adenosyl-L-methionine site. Cys-375 functions as the Nucleophile in the catalytic mechanism.

The protein belongs to the class I-like SAM-binding methyltransferase superfamily. RsmB/NOP family.

It localises to the cytoplasm. It catalyses the reaction cytidine(967) in 16S rRNA + S-adenosyl-L-methionine = 5-methylcytidine(967) in 16S rRNA + S-adenosyl-L-homocysteine + H(+). Functionally, specifically methylates the cytosine at position 967 (m5C967) of 16S rRNA. The sequence is that of Ribosomal RNA small subunit methyltransferase B from Yersinia pestis bv. Antiqua (strain Angola).